The sequence spans 909 residues: Alanine--tRNA ligase (909 aa).

Residues histidine 600, histidine 604, cysteine 704, and histidine 708 each contribute to the Zn(2+) site.

Belongs to the class-II aminoacyl-tRNA synthetase family. It depends on Zn(2+) as a cofactor.

It localises to the cytoplasm. It catalyses the reaction tRNA(Ala) + L-alanine + ATP = L-alanyl-tRNA(Ala) + AMP + diphosphate. Its function is as follows. Catalyzes the attachment of alanine to tRNA(Ala) in a two-step reaction: alanine is first activated by ATP to form Ala-AMP and then transferred to the acceptor end of tRNA(Ala). Also edits incorrectly charged Ser-tRNA(Ala) and Gly-tRNA(Ala) via its editing domain. The sequence is that of Alanine--tRNA ligase from Staphylothermus marinus (strain ATCC 43588 / DSM 3639 / JCM 9404 / F1).